The chain runs to 152 residues: SsrA-binding protein (152 aa).

Belongs to the SmpB family.

The protein resides in the cytoplasm. Required for rescue of stalled ribosomes mediated by trans-translation. Binds to transfer-messenger RNA (tmRNA), required for stable association of tmRNA with ribosomes. tmRNA and SmpB together mimic tRNA shape, replacing the anticodon stem-loop with SmpB. tmRNA is encoded by the ssrA gene; the 2 termini fold to resemble tRNA(Ala) and it encodes a 'tag peptide', a short internal open reading frame. During trans-translation Ala-aminoacylated tmRNA acts like a tRNA, entering the A-site of stalled ribosomes, displacing the stalled mRNA. The ribosome then switches to translate the ORF on the tmRNA; the nascent peptide is terminated with the 'tag peptide' encoded by the tmRNA and targeted for degradation. The ribosome is freed to recommence translation, which seems to be the essential function of trans-translation. This chain is SsrA-binding protein, found in Helicobacter pylori (strain Shi470).